The following is a 166-amino-acid chain: Regulatory protein RecX (166 aa).

The protein belongs to the RecX family.

The protein resides in the cytoplasm. Modulates RecA activity. In Klebsiella pneumoniae (strain 342), this protein is Regulatory protein RecX.